The chain runs to 204 residues: MVSLKTGILGGTFDPIHTGHLILADEVKNRLGLDEVIFIPTGQPYYKADKTISPAEDRLNMVKLAISDKPYFRVMDIEIKRSGPTYTADTLNDLKTILPEKTELYFMLGWDNLEALPRWHKASEIIRLCRLVAAPRIGQVKPDVDELDDKLPGLQQSLILLSKPEVDISSSLVRERVENGQGVEHLVPAAVASYIKKHNLYCRK.

The protein belongs to the NadD family.

The catalysed reaction is nicotinate beta-D-ribonucleotide + ATP + H(+) = deamido-NAD(+) + diphosphate. It participates in cofactor biosynthesis; NAD(+) biosynthesis; deamido-NAD(+) from nicotinate D-ribonucleotide: step 1/1. Its function is as follows. Catalyzes the reversible adenylation of nicotinate mononucleotide (NaMN) to nicotinic acid adenine dinucleotide (NaAD). In Dehalococcoides mccartyi (strain ATCC BAA-2100 / JCM 16839 / KCTC 5957 / BAV1), this protein is Probable nicotinate-nucleotide adenylyltransferase.